A 102-amino-acid chain; its full sequence is Large ribosomal subunit protein bL21 (102 aa).

Belongs to the bacterial ribosomal protein bL21 family. In terms of assembly, part of the 50S ribosomal subunit. Contacts protein L20.

This protein binds to 23S rRNA in the presence of protein L20. This chain is Large ribosomal subunit protein bL21, found in Citrifermentans bemidjiense (strain ATCC BAA-1014 / DSM 16622 / JCM 12645 / Bem) (Geobacter bemidjiensis).